The chain runs to 95 residues: Large ribosomal subunit protein bL27 (95 aa).

The interval 1-25 (MAHKKGTGSTRNGRDSNAQRLGVKR) is disordered. Over residues 7-19 (TGSTRNGRDSNAQ) the composition is skewed to polar residues.

This sequence belongs to the bacterial ribosomal protein bL27 family.

In Gloeobacter violaceus (strain ATCC 29082 / PCC 7421), this protein is Large ribosomal subunit protein bL27.